Here is a 96-residue protein sequence, read N- to C-terminus: Large ribosomal subunit protein bL27 (96 aa).

Positions 1–9 are excised as a propeptide; it reads MLKFDIQHF. Positions 1–33 are disordered; the sequence is MLKFDIQHFAHKKGGGSTSNGRDSESKRLGAKR. A compositionally biased stretch (basic and acidic residues) spans 22-33; that stretch reads RDSESKRLGAKR.

Belongs to the bacterial ribosomal protein bL27 family. In terms of processing, the N-terminus is cleaved by ribosomal processing cysteine protease Prp.

This chain is Large ribosomal subunit protein bL27, found in Listeria innocua serovar 6a (strain ATCC BAA-680 / CLIP 11262).